Consider the following 967-residue polypeptide: Sulfite dehydrogenase subunit A (967 aa).

A 4Fe-4S Mo/W bis-MGD-type domain is found at 15–71; sequence VEVKETTCYMCACRCGIRVHLRDGEVRYIDGNPNHPLNKGVICAKGSSGIMKQYSPG. The [4Fe-4S] cluster site is built by Cys22, Cys25, Cys29, and Cys57.

The protein belongs to the prokaryotic molybdopterin-containing oxidoreductase family. Forms a heterotrimeric membrane-bound complex composed of a catalytic heterodimer (SoeAB) and a membrane anchor protein (SoeC). The cofactor is [4Fe-4S] cluster. Mo-bis(molybdopterin guanine dinucleotide) is required as a cofactor.

It localises to the cell inner membrane. The catalysed reaction is a quinone + sulfite + H2O = a quinol + sulfate. The enzyme catalyses a menaquinone + sulfite + H2O = a menaquinol + sulfate. Its function is as follows. Part of the SoeABC complex that catalyzes the oxidation of sulfite to sulfate. The polypeptide is Sulfite dehydrogenase subunit A (Allochromatium vinosum (strain ATCC 17899 / DSM 180 / NBRC 103801 / NCIMB 10441 / D) (Chromatium vinosum)).